Reading from the N-terminus, the 1194-residue chain is ATP-dependent RNA helicase DHX30 (1194 aa).

Positions 1-10 (MFSLDSFRKD) are enriched in basic and acidic residues. Residues 1-27 (MFSLDSFRKDRAQHRQRQCKLPPPRLP) are disordered. S6 is modified (phosphoserine). The region spanning 53–121 (PKNLLNSVIG…QAAAAACQLF (69 aa)) is the DRBM domain. The tract at residues 150–199 (ADSWWRPEPTMPPTSWRQLNPESIRPGGPGGLSRSLGREEEEDEEEELEE) is disordered. The segment covering 188-199 (EEEEDEEEELEE) has biased composition (acidic residues). Phosphoserine occurs at positions 226 and 380. The Helicase ATP-binding domain occupies 444-612 (LNAIEQHPVV…FGGCPVIKVP (169 aa)). An ATP-binding site is contributed by 457–464 (GDTGCGKT). A DEAH box motif is present at residues 559 to 562 (DEVH). The 174-residue stretch at 654–827 (LVTDLVLHID…NLVLQAKIHM (174 aa)) folds into the Helicase C-terminal domain.

The protein belongs to the DEAD box helicase family. DEAH subfamily. In terms of assembly, identified in a complex with TFAM and SSBP1. Interacts (via N-terminus) with ZC3HAV1 (via N-terminal domain) in an RNA-independent manner. Found in a complex with GRSF1, DDX28, FASTKD2 and FASTKD5.

The protein localises to the cytoplasm. It localises to the mitochondrion. It is found in the mitochondrion matrix. The protein resides in the mitochondrion nucleoid. It catalyses the reaction ATP + H2O = ADP + phosphate + H(+). In terms of biological role, RNA-dependent helicase. Plays an important role in the assembly of the mitochondrial large ribosomal subunit. Required for optimal function of the zinc-finger antiviral protein ZC3HAV1. Associates with mitochondrial DNA. Involved in nervous system development and differentiation through its involvement in the up-regulation of a number of genes which are required for neurogenesis, including GSC, NCAM1, neurogenin, and NEUROD. This chain is ATP-dependent RNA helicase DHX30 (DHX30), found in Pongo abelii (Sumatran orangutan).